The following is a 145-amino-acid chain: Peptide methionine sulfoxide reductase MsrB (145 aa).

The MsrB domain maps to 6–129 (EEELKQTLTD…NAAALRFVPV (124 aa)). The active-site Nucleophile is cysteine 118.

It belongs to the MsrB Met sulfoxide reductase family.

The enzyme catalyses L-methionyl-[protein] + [thioredoxin]-disulfide + H2O = L-methionyl-(R)-S-oxide-[protein] + [thioredoxin]-dithiol. The sequence is that of Peptide methionine sulfoxide reductase MsrB from Enterococcus faecalis (strain ATCC 700802 / V583).